A 481-amino-acid polypeptide reads, in one-letter code: Squalene epoxidase erg1 (481 aa).

A helical transmembrane segment spans residues 28-48 (HADVVIIGAGVLGCALAVALG). Residues 38–39 (VL), 58–59 (EA), Arg-66, and Arg-138 each bind FAD. N-linked (GlcNAc...) asparagine glycosylation is present at Asn-146. Residues Asp-319 and Met-332 each contribute to the FAD site. 2 helical membrane-spanning segments follow: residues 425-445 (KPSVLFVHFFSVALLSLWVLL) and 452-472 (LFPVALFKCIMTFWTACVVIF).

The protein belongs to the squalene monooxygenase family. The cofactor is FAD.

The protein localises to the endoplasmic reticulum membrane. It is found in the microsome membrane. It catalyses the reaction squalene + reduced [NADPH--hemoprotein reductase] + O2 = (S)-2,3-epoxysqualene + oxidized [NADPH--hemoprotein reductase] + H2O + H(+). It functions in the pathway steroid metabolism; ergosterol biosynthesis. Its function is as follows. Squalene epoxidase; part of the third module of ergosterol biosynthesis pathway that includes the late steps of the pathway. Erg1 catalyzes the epoxidation of squalene into 2,3-epoxysqualene. The third module or late pathway involves the ergosterol synthesis itself through consecutive reactions that mainly occur in the endoplasmic reticulum (ER) membrane. Firstly, the squalene synthase erg9 catalyzes the condensation of 2 farnesyl pyrophosphate moieties to form squalene, which is the precursor of all steroids. Squalene synthase is crucial for balancing the incorporation of farnesyl diphosphate (FPP) into sterol and nonsterol isoprene synthesis. Secondly, squalene is converted into lanosterol by the consecutive action of the squalene epoxidase erg1 and the lanosterol synthase erg7. Then, the delta(24)-sterol C-methyltransferase erg6 methylates lanosterol at C-24 to produce eburicol. Eburicol is the substrate of the sterol 14-alpha demethylase encoded by cyp51A and cyp51B, to yield 4,4,24-trimethyl ergosta-8,14,24(28)-trienol. The C-14 reductase erg24 then reduces the C14=C15 double bond which leads to 4,4-dimethylfecosterol. A sequence of further demethylations at C-4, involving the C-4 demethylation complex containing the C-4 methylsterol oxidases erg25A or erg25B, the sterol-4-alpha-carboxylate 3-dehydrogenase erg26 and the 3-keto-steroid reductase erg27, leads to the production of fecosterol via 4-methylfecosterol. The C-8 sterol isomerase erg2 then catalyzes the reaction which results in unsaturation at C-7 in the B ring of sterols and thus converts fecosterol to episterol. The sterol-C5-desaturase erg3B then catalyzes the introduction of a C-5 double bond in the B ring to produce 5-dehydroepisterol. The 2 other sterol-C5-desaturases, erg3A and erg3C, seem to be less important in ergosterol biosynthesis. The C-22 sterol desaturase erg5 further converts 5-dehydroepisterol into ergosta-5,7,22,24(28)-tetraen-3beta-ol by forming the C-22(23) double bond in the sterol side chain. Finally, ergosta-5,7,22,24(28)-tetraen-3beta-ol is substrate of the C-24(28) sterol reductases erg4A and erg4B to produce ergosterol. Possible alternative sterol biosynthetic pathways might exist from fecosterol to ergosterol, depending on the activities of the erg3 isoforms. This chain is Squalene epoxidase erg1, found in Aspergillus fumigatus (strain ATCC MYA-4609 / CBS 101355 / FGSC A1100 / Af293) (Neosartorya fumigata).